A 128-amino-acid polypeptide reads, in one-letter code: Ribonuclease P protein component (128 aa).

This sequence belongs to the RnpA family. As to quaternary structure, consists of a catalytic RNA component (M1 or rnpB) and a protein subunit.

It carries out the reaction Endonucleolytic cleavage of RNA, removing 5'-extranucleotides from tRNA precursor.. RNaseP catalyzes the removal of the 5'-leader sequence from pre-tRNA to produce the mature 5'-terminus. It can also cleave other RNA substrates such as 4.5S RNA. The protein component plays an auxiliary but essential role in vivo by binding to the 5'-leader sequence and broadening the substrate specificity of the ribozyme. The sequence is that of Ribonuclease P protein component from Mycoplasma genitalium (strain ATCC 33530 / DSM 19775 / NCTC 10195 / G37) (Mycoplasmoides genitalium).